We begin with the raw amino-acid sequence, 307 residues long: uncharacterized protein (307 aa).

8 consecutive transmembrane segments (helical) span residues 1-21 (MLILISFTALILFFLAGMNML), 52-72 (IVFTGILQSSSAFMVIVIGFV), 99-119 (FIAIKMDIVIWVLLIGGLLFF), 133-153 (FLGLGIIFFCISGFSHLAGPL), 174-194 (LLIGMVLTAIIHSSSVCIGIL), 208-228 (AMSVVLGSNIGTCITAVMAAV), 242-262 (VVFNVLGVALVLPFLTAATGF), and 277-297 (FSLLFNVVTALLFLPLTNLFY).

It localises to the cell membrane. This is an uncharacterized protein from Bacillus subtilis (strain 168).